Consider the following 194-residue polypeptide: Imidazoleglycerol-phosphate dehydratase (194 aa).

The protein belongs to the imidazoleglycerol-phosphate dehydratase family.

The protein localises to the cytoplasm. The enzyme catalyses D-erythro-1-(imidazol-4-yl)glycerol 3-phosphate = 3-(imidazol-4-yl)-2-oxopropyl phosphate + H2O. It functions in the pathway amino-acid biosynthesis; L-histidine biosynthesis; L-histidine from 5-phospho-alpha-D-ribose 1-diphosphate: step 6/9. In Streptococcus mutans serotype c (strain ATCC 700610 / UA159), this protein is Imidazoleglycerol-phosphate dehydratase.